A 376-amino-acid polypeptide reads, in one-letter code: Chaperone protein DnaJ (376 aa).

Residues Asp-5–Gly-72 form the J domain. The CR-type zinc-finger motif lies at Gly-136–Gln-214. Cys-149, Cys-152, Cys-166, Cys-169, Cys-188, Cys-191, Cys-202, and Cys-205 together coordinate Zn(2+). CXXCXGXG motif repeat units lie at residues Cys-149 to Gly-156, Cys-166 to Gly-173, Cys-188 to Gly-195, and Cys-202 to Gly-209. 2 disordered regions span residues Asp-227 to Pro-246 and Ser-352 to Ser-376. Positions Gly-237 to Pro-246 are enriched in gly residues. The segment covering Trp-367–Ser-376 has biased composition (basic and acidic residues).

It belongs to the DnaJ family. Homodimer. Zn(2+) serves as cofactor.

The protein localises to the cytoplasm. Functionally, participates actively in the response to hyperosmotic and heat shock by preventing the aggregation of stress-denatured proteins and by disaggregating proteins, also in an autonomous, DnaK-independent fashion. Unfolded proteins bind initially to DnaJ; upon interaction with the DnaJ-bound protein, DnaK hydrolyzes its bound ATP, resulting in the formation of a stable complex. GrpE releases ADP from DnaK; ATP binding to DnaK triggers the release of the substrate protein, thus completing the reaction cycle. Several rounds of ATP-dependent interactions between DnaJ, DnaK and GrpE are required for fully efficient folding. Also involved, together with DnaK and GrpE, in the DNA replication of plasmids through activation of initiation proteins. In Acidovorax sp. (strain JS42), this protein is Chaperone protein DnaJ.